The following is a 130-amino-acid chain: DNA-directed RNA polymerase subunit omega (130 aa).

2 disordered regions span residues 79–98 and 108–130; these read EPES…VDAD and TEEE…EEDE.

Belongs to the RNA polymerase subunit omega family. In terms of assembly, the RNAP catalytic core consists of 2 alpha, 1 beta, 1 beta' and 1 omega subunit. When a sigma factor is associated with the core the holoenzyme is formed, which can initiate transcription.

The enzyme catalyses RNA(n) + a ribonucleoside 5'-triphosphate = RNA(n+1) + diphosphate. Its function is as follows. Promotes RNA polymerase assembly. Latches the N- and C-terminal regions of the beta' subunit thereby facilitating its interaction with the beta and alpha subunits. The protein is DNA-directed RNA polymerase subunit omega of Nitrobacter winogradskyi (strain ATCC 25391 / DSM 10237 / CIP 104748 / NCIMB 11846 / Nb-255).